Here is a 590-residue protein sequence, read N- to C-terminus: Multidrug resistance ABC transporter ATP-binding and permease protein (590 aa).

6 helical membrane-spanning segments follow: residues 35-55 (YLFF…QLQV), 79-99 (IALY…LGIF), 150-170 (IPQA…MLQM), 176-196 (LAMI…MTFG), 261-281 (VMML…IYLI), and 292-312 (LGMM…ATFF). Residues 38-317 (FIIGILAGIV…VATFFTELAK (280 aa)) enclose the ABC transmembrane type-1 domain. Residues 349–584 (LSARHVDFAY…HPLYAKYVSE (236 aa)) form the ABC transporter domain. Position 382 to 389 (382 to 389 (GPSGGGKS)) interacts with ATP.

The protein belongs to the ABC transporter superfamily. Multidrug exporter LmrA (TC 3.A.1.117.1) family. As to quaternary structure, homodimer.

Its subcellular location is the cell membrane. The catalysed reaction is ATP + H2O + xenobioticSide 1 = ADP + phosphate + xenobioticSide 2.. In terms of biological role, efflux transporter for a variety of amphiphilic cationic compounds, including antibiotics. The protein is Multidrug resistance ABC transporter ATP-binding and permease protein (lmrA) of Lactococcus lactis subsp. lactis (strain IL1403) (Streptococcus lactis).